The chain runs to 704 residues: MPRNTALEKYRNIGICAHVDAGKTTTTERILFYTGLSHKIGEVHDGAATMDWMEQEQERGITITSAATTTFWSGMDQQFEKHRINIIDTPGHVDFTIEVERSLRVLDGAVVVFCGSSGVEPQSETVWRQANKYGVPRIVFVNKMDRSGADFERVCAQIKTRLKANVVPVQLNIGAEEDFKGVIDLIRMKAIMWNEEDMGLTYELVDIPADLQDRAEELRMEMIEAAAEASEELMEKYLEGGELSEDEIHQGLRARVLNNEIVLAFCGSAFKNKGVQAVLDGVVRYLPAPNQVPAIKCETEDGEPASRPSSDDAPFAALAFKLATDPFVGNLTFIRVYSGVLKSGDAVYNPVKGKKERVGRIVQMHANKRDEIKEVRAGDIAACIGLKDVTTGDTLCDQEDVVILEKMDFPEPVISVAVEPKSKADQEKMSIALGKLAAEDPSFRVKTDEESGQTIISGMGELHLDIIVDRMRREFKVEANVGNPQVAYRETIRSKVEQEAKFVRQSGGRGQYGHVFVRFEPLDEVDENGEAKVFKFVDEVVGGVVPKEYIGSVAKGIEEQLNNGVLAGYPMIGVKATLYDGSYHDVDSSEMAFKIAGSMALKEGAKKANACILEPIMKVEVVTPEDYLGDVMGDLNRRRGIIEGMDENPSGRVINALVPLAEMFGYATNVRSISQGRASFSMEFKKYAEVPNNIADEIIKSHNS.

The tr-type G domain maps to 8-290 (EKYRNIGICA…GVVRYLPAPN (283 aa)). Residues 17-24 (AHVDAGKT), 88-92 (DTPGH), and 142-145 (NKMD) each bind GTP.

The protein belongs to the TRAFAC class translation factor GTPase superfamily. Classic translation factor GTPase family. EF-G/EF-2 subfamily.

It is found in the cytoplasm. Catalyzes the GTP-dependent ribosomal translocation step during translation elongation. During this step, the ribosome changes from the pre-translocational (PRE) to the post-translocational (POST) state as the newly formed A-site-bound peptidyl-tRNA and P-site-bound deacylated tRNA move to the P and E sites, respectively. Catalyzes the coordinated movement of the two tRNA molecules, the mRNA and conformational changes in the ribosome. The polypeptide is Elongation factor G (Francisella tularensis subsp. mediasiatica (strain FSC147)).